A 592-amino-acid chain; its full sequence is Aspartate--tRNA(Asp/Asn) ligase (592 aa).

Residue glutamate 182 coordinates L-aspartate. The aspartate stretch occupies residues glutamine 206 to lysine 209. Arginine 228 is an L-aspartate binding site. ATP-binding positions include arginine 228 to glutamate 230 and glutamine 237. Histidine 455 is an L-aspartate binding site. Residue glutamate 489 participates in ATP binding. Position 496 (arginine 496) interacts with L-aspartate. ATP is bound at residue glycine 541 to arginine 544.

It belongs to the class-II aminoacyl-tRNA synthetase family. Type 1 subfamily. In terms of assembly, homodimer.

It localises to the cytoplasm. The enzyme catalyses tRNA(Asx) + L-aspartate + ATP = L-aspartyl-tRNA(Asx) + AMP + diphosphate. Its function is as follows. Aspartyl-tRNA synthetase with relaxed tRNA specificity since it is able to aspartylate not only its cognate tRNA(Asp) but also tRNA(Asn). Reaction proceeds in two steps: L-aspartate is first activated by ATP to form Asp-AMP and then transferred to the acceptor end of tRNA(Asp/Asn). This chain is Aspartate--tRNA(Asp/Asn) ligase, found in Thermoanaerobacter sp. (strain X514).